Here is an 876-residue protein sequence, read N- to C-terminus: DNA double-strand break repair Rad50 ATPase (876 aa).

ATP is bound by residues arginine 11, 31–37 (NGAGKTT), and glutamine 139. Coiled-coil stretches lie at residues 188–528 (RERV…EDRL) and 575–710 (SGVE…RKER). Residues 387 to 484 (EETLQSEYEE…RLESVRRELE (98 aa)) enclose the Zinc-hook domain. Residues cysteine 432 and cysteine 435 each contribute to the Zn(2+) site.

The protein belongs to the SMC family. RAD50 subfamily. In terms of assembly, homodimer. Forms a heterotetramer composed of two Mre11 subunits and two Rad50 subunits. It depends on Zn(2+) as a cofactor.

In terms of biological role, part of the Rad50/Mre11 complex, which is involved in the early steps of DNA double-strand break (DSB) repair. The complex may facilitate opening of the processed DNA ends to aid in the recruitment of HerA and NurA. Rad50 controls the balance between DNA end bridging and DNA resection via ATP-dependent structural rearrangements of the Rad50/Mre11 complex. The sequence is that of DNA double-strand break repair Rad50 ATPase from Methanopyrus kandleri (strain AV19 / DSM 6324 / JCM 9639 / NBRC 100938).